We begin with the raw amino-acid sequence, 104 residues long: L-rhamnose mutarotase (104 aa).

Position 18 (tyrosine 18) interacts with substrate. Catalysis depends on histidine 22, which acts as the Proton donor. Substrate-binding positions include tyrosine 41 and 76–77 (WW).

This sequence belongs to the rhamnose mutarotase family. As to quaternary structure, homodimer.

The protein localises to the cytoplasm. The catalysed reaction is alpha-L-rhamnose = beta-L-rhamnose. The protein operates within carbohydrate metabolism; L-rhamnose metabolism. In terms of biological role, involved in the anomeric conversion of L-rhamnose. The polypeptide is L-rhamnose mutarotase (Jannaschia sp. (strain CCS1)).